We begin with the raw amino-acid sequence, 467 residues long: tRNA(Ile)-lysidine synthase (467 aa).

Residue 26-31 participates in ATP binding; it reads SGGPDS.

This sequence belongs to the tRNA(Ile)-lysidine synthase family.

The protein localises to the cytoplasm. It catalyses the reaction cytidine(34) in tRNA(Ile2) + L-lysine + ATP = lysidine(34) in tRNA(Ile2) + AMP + diphosphate + H(+). Functionally, ligates lysine onto the cytidine present at position 34 of the AUA codon-specific tRNA(Ile) that contains the anticodon CAU, in an ATP-dependent manner. Cytidine is converted to lysidine, thus changing the amino acid specificity of the tRNA from methionine to isoleucine. This chain is tRNA(Ile)-lysidine synthase, found in Clostridium tetani (strain Massachusetts / E88).